The chain runs to 187 residues: UPF0398 protein MW1336 (187 aa).

Belongs to the UPF0398 family.

This chain is UPF0398 protein MW1336, found in Staphylococcus aureus (strain MW2).